A 195-amino-acid polypeptide reads, in one-letter code: MSAANMPTTTGAQGSGNQVPRTSTTIVNHRELIKEPKNLDEAANYLFQTLLDDAVVGIFNETHHLRKSGNLAALDGVPEDSTYRMCEMPNLDIFGISTAKKPMDCTCPNCDRLVAAARFAPHLEKCMGMGRISSRIASRRLATKEGATSAHLHSSGNTGGTDDEDDVDWSSDKRRKKSNQNSRNNGSKKNNGKTF.

Residues Met1 to Thr22 are disordered. An SGF11-type zinc finger spans residues Cys105–Cys126. The disordered stretch occupies residues Arg140–Phe195. Position 171 is a phosphoserine (Ser171). The span at Asn179 to Phe195 shows a compositional bias: low complexity.

This sequence belongs to the SGF11 family. As to quaternary structure, component of some SAGA transcription coactivator-HAT complexes, at least composed of Ada2b, not/nonstop, Pcaf/Gcn5, Sgf11 and Spt3. Within the SAGA complex, Sgf11, e(y)2, and not/nonstop form an additional subcomplex of SAGA called the DUB module (deubiquitination module). Interacts directly with not/nonstop. Interacts with the AMEX complex component xmas-2. Interacts with Cbp80; important for promoter recruitment of Sgf11 that is not associated with the DUB module.

Its subcellular location is the nucleus. The protein resides in the nucleoplasm. The protein localises to the cytoplasm. Component of the transcription regulatory histone acetylation (HAT) complex SAGA, a multiprotein complex that activates transcription by remodeling chromatin and mediating histone acetylation and deubiquitination. Within the SAGA complex, participates in a subcomplex that specifically deubiquitinates histone H2B. The SAGA complex is recruited to specific gene promoters by activators, where it is required for transcription. Required for nuclear receptor-mediated transactivation. Binds independently on SAGA to promoters in an RNA-dependent manner. Binds to mRNA and is essential for total mRNA export from the nucleus. Required to counteract heterochromatin silencing. Controls the development of neuronal connectivity in visual system by being required for accurate axon targeting in the optic lobe. Required for expression of ecdysone-induced genes such as br/broad. The sequence is that of SAGA-associated factor 11 homolog from Drosophila sechellia (Fruit fly).